We begin with the raw amino-acid sequence, 328 residues long: D-cysteine desulfhydrase (328 aa).

Residue K51 is modified to N6-(pyridoxal phosphate)lysine.

It belongs to the ACC deaminase/D-cysteine desulfhydrase family. Homodimer. Pyridoxal 5'-phosphate is required as a cofactor.

The catalysed reaction is D-cysteine + H2O = hydrogen sulfide + pyruvate + NH4(+) + H(+). Catalyzes the alpha,beta-elimination reaction of D-cysteine and of several D-cysteine derivatives. It could be a defense mechanism against D-cysteine. This chain is D-cysteine desulfhydrase, found in Klebsiella pneumoniae subsp. pneumoniae (strain ATCC 700721 / MGH 78578).